Reading from the N-terminus, the 314-residue chain is Ribosomal RNA small subunit methyltransferase H (314 aa).

S-adenosyl-L-methionine contacts are provided by residues 36–38 (AGH), D56, F83, D104, and Q111.

This sequence belongs to the methyltransferase superfamily. RsmH family.

It is found in the cytoplasm. The catalysed reaction is cytidine(1402) in 16S rRNA + S-adenosyl-L-methionine = N(4)-methylcytidine(1402) in 16S rRNA + S-adenosyl-L-homocysteine + H(+). Its function is as follows. Specifically methylates the N4 position of cytidine in position 1402 (C1402) of 16S rRNA. The chain is Ribosomal RNA small subunit methyltransferase H from Brevibacillus brevis (strain 47 / JCM 6285 / NBRC 100599).